An 887-amino-acid chain; its full sequence is Autotaxin (887 aa).

A signal peptide spans 1-27 (MARQGCLGSFQVISLFTFAISVNICLG). Positions 28 to 35 (FTASRIKR) are cleaved as a propeptide — removed by furin. N-linked (GlcNAc...) asparagine glycosylation occurs at Asn53. SMB domains follow at residues 54 to 97 (TSGS…LKTA) and 98 to 142 (RGWE…GESH). Disulfide bonds link Cys58–Cys75, Cys62–Cys93, Cys73–Cys86, Cys79–Cys85, Cys102–Cys119, Cys107–Cys137, Cys117–Cys130, Cys123–Cys129, Cys148–Cys194, and Cys156–Cys350. The Cell attachment site motif lies at 126-128 (RGD). Residues 144–501 (VDDDCEEIKV…PTFKYRTKVP (358 aa)) are phosphodiesterase. The Zn(2+) site is built by Asp171 and Thr209. The active-site Nucleophile is the Thr209. 1-(9Z-octadecenoyl)-sn-glycero-3-phosphate is bound by residues Thr209, Asn230, and Asp311. Positions 209, 230, and 311 each coordinate 1-hexadecanoyl-sn-glycero-3-phosphate. The 1-tetradecanoyl-sn-glycerol 3-phosphate site is built by Thr209, Asn230, and Asp311. Zn(2+) is bound by residues Asp311, His315, Asp358, and His359. 5 disulfide bridges follow: Cys366–Cys468, Cys413–Cys830, Cys566–Cys691, Cys568–Cys676, and Cys799–Cys809. N-linked (GlcNAc...) asparagine glycosylation is found at Asn398 and Asn410. His474 is a Zn(2+) binding site. His474 contributes to the 1-(9Z-octadecenoyl)-sn-glycero-3-phosphate binding site. His474 serves as a coordination point for 1-hexadecanoyl-sn-glycero-3-phosphate. His474 serves as a coordination point for 1-tetradecanoyl-sn-glycerol 3-phosphate. N-linked (GlcNAc...) asparagine glycosylation is present at Asn524. The span at 586-607 (HTKGSTEAETGKFRGSKHENKK) shows a compositional bias: basic and acidic residues. The tract at residues 586-615 (HTKGSTEAETGKFRGSKHENKKNLNGSVEP) is disordered. Asn610 carries N-linked (GlcNAc...) asparagine glycosylation. The tract at residues 622–887 (LYGRPAVLYR…TYLHTYESEI (266 aa)) is nuclease-like domain. 5 residues coordinate Ca(2+): Asp764, Asn766, Asp768, Leu770, and Asp772. Asn831 is a glycosylation site (N-linked (GlcNAc...) asparagine). Residues 854-875 (IEHLTGLDFYRKTSRSYSEILT) form a required for secretion region.

The protein belongs to the nucleotide pyrophosphatase/phosphodiesterase family. Zn(2+) is required as a cofactor. Requires Ca(2+) as cofactor. In terms of processing, N-glycosylation, but not furin-cleavage, plays a critical role on secretion and on lysoPLD activity. The interdomain disulfide bond between Cys-413 and Cys-830 is essential for catalytic activity. Abundantly expressed in cerebrum and cerebellum. Localized in secretory epithelial cells in the brain and the eye including choroid plexus epithelial cells, ciliary epithelial cells, iris pigment epithelial cells, and retinal pigment cells.

It localises to the secreted. The catalysed reaction is a 1-O-alkyl-sn-glycero-3-phosphoethanolamine + H2O = a 1-O-alkyl-sn-glycero-3-phosphate + ethanolamine + H(+). The enzyme catalyses a 1-acyl-sn-glycero-3-phosphoethanolamine + H2O = a 1-acyl-sn-glycero-3-phosphate + ethanolamine + H(+). It carries out the reaction 1-(9Z-octadecenoyl)-sn-glycero-3-phosphoethanolamine + H2O = 1-(9Z-octadecenoyl)-sn-glycero-3-phosphate + ethanolamine + H(+). It catalyses the reaction a 1-O-alkyl-sn-glycero-3-phosphocholine + H2O = a 1-O-alkyl-sn-glycero-3-phosphate + choline + H(+). The catalysed reaction is 1-O-(9Z-octadecenyl)-sn-glycero-3-phosphocholine + H2O = 1-O-(9Z-octadecenyl)-sn-glycero-3-phosphate + choline + H(+). The enzyme catalyses 1-O-hexadecyl-sn-glycero-3-phosphocholine + H2O = 1-O-hexadecyl-sn-glycero-3-phosphate + choline + H(+). It carries out the reaction a 1-O-(1Z-alkenyl)-sn-glycero-3-phosphocholine + H2O = a 1-O-(1Z-alkenyl)-sn-glycero-3-phosphate + choline + H(+). It catalyses the reaction a 1-acyl-sn-glycero-3-phosphocholine + H2O = a 1-acyl-sn-glycero-3-phosphate + choline + H(+). The catalysed reaction is 1-dodecanoyl-sn-glycero-3-phosphocholine + H2O = 1-dodecanoyl-sn-glycerol 3-phosphate + choline + H(+). The enzyme catalyses 1-(9Z-octadecenoyl)-sn-glycero-3-phosphocholine + H2O = 1-(9Z-octadecenoyl)-sn-glycero-3-phosphate + choline + H(+). It carries out the reaction 1-tetradecanoyl-sn-glycero-3-phosphocholine + H2O = 1-tetradecanoyl-sn-glycerol 3-phosphate + choline + H(+). It catalyses the reaction 1-decanoyl-sn-glycero-3-phosphocholine + H2O = 1-decanoyl-sn-glycero-3-phosphate + choline + H(+). The catalysed reaction is 1-octadecanoyl-sn-glycero-3-phosphocholine + H2O = 1-octadecanoyl-sn-glycero-3-phosphate + choline + H(+). The enzyme catalyses 1-hexadecanoyl-sn-glycero-3-phosphocholine + H2O = 1-hexadecanoyl-sn-glycero-3-phosphate + choline + H(+). It carries out the reaction 1-hexanoyl-sn-glycero-3-phosphocholine + H2O = 1-hexanoyl-sn-glycero-3-phosphate + choline + H(+). It catalyses the reaction 1-(9Z,12Z)-octadecadienoyl-sn-glycero-3-phosphocholine + H2O = 1-(9Z,12Z)-octadecadienoyl-sn-glycero-3-phosphate + choline + H(+). The catalysed reaction is sphing-4-enine-phosphocholine + H2O = sphing-4-enine 1-phosphate + choline + H(+). The enzyme catalyses 1-(5Z,8Z,11Z,14Z-eicosatetraenoyl)-sn-glycero-3-phosphocholine + H2O = 1-(5Z,8Z,11Z,14Z-eicosatetraenoyl)-sn-glycero-3-phosphate + choline + H(+). It carries out the reaction a 2-acyl-sn-glycero-3-phosphocholine + H2O = a 2-acyl-sn-glycerol 3-phosphate + choline + H(+). It catalyses the reaction a 1,2-diacyl-sn-glycero-3-phosphocholine + H2O = a 1,2-diacyl-sn-glycero-3-phosphate + choline + H(+). The catalysed reaction is 1,2-dioctanoyl-sn-glycero-3-phosphocholine + H2O = 1,2-dioctanoyl-sn-glycero-3-phosphate + choline + H(+). The enzyme catalyses 1,2-didecanoyl-sn-glycero-3-phosphocholine + H2O = 1,2-didecanoyl-sn-glycero-3-phosphate + choline + H(+). It carries out the reaction a 1-acyl-sn-glycero-3-phospho-L-serine + H2O = a 1-acyl-sn-glycero-3-phosphate + L-serine + H(+). It catalyses the reaction 1-(9Z-octadecenoyl)-sn-glycero-3-phospho-L-serine + H2O = 1-(9Z-octadecenoyl)-sn-glycero-3-phosphate + L-serine + H(+). The catalysed reaction is a 2-acyl-sn-glycero-3-phospho-L-serine + H2O = a 2-acyl-sn-glycerol 3-phosphate + L-serine + H(+). Inhibited by vanadate. Inhibited by micromolar levels of bile salts, such as tauroursodeoxycholate. Not inhibited by taurodeoxycholate. Not inhibited by hydroxysterols, such as 7-hydroxycholesterol, testosterone, dexamethasone and prednisolone. Inhibited by EDTA and EGTA. In terms of biological role, secreted lysophospholipase D that hydrolyzes lysophospholipids to produce the signaling molecule lysophosphatidic acid (LPA) in extracellular fluids. Its major substrate is lysophosphatidylcholine. Can also act on sphingosylphosphorylcholine producing sphingosine-1-phosphate, a modulator of cell motility. Can hydrolyze, in vitro, bis-pNPP, to some extent pNP-TMP, and barely ATP. Involved in several motility-related processes such as angiogenesis and neurite outgrowth. Acts as an angiogenic factor by stimulating migration of smooth muscle cells and microtubule formation. Stimulates migration of melanoma cells, probably via a pertussis toxin-sensitive G protein. May have a role in induction of parturition. Possible involvement in cell proliferation and adipose tissue development. Required for LPA production in activated platelets, cleaves the sn-1 lysophospholipids to generate sn-1 lysophosphatidic acids containing predominantly 18:2 and 20:4 fatty acids. Shows a preference for the sn-1 to the sn-2 isomer of 1-O-alkyl-sn-glycero-3-phosphocholine (lyso-PAF). This chain is Autotaxin, found in Rattus norvegicus (Rat).